Here is a 1079-residue protein sequence, read N- to C-terminus: Carbamoyl phosphate synthase large chain (1079 aa).

The tract at residues 2 to 403 is carboxyphosphate synthetic domain; sequence PKSTDIKSIL…SIQKAIRGLE (402 aa). 12 residues coordinate ATP: R129, R169, G175, G176, E208, L210, E215, G241, I242, H243, Q285, and E299. The region spanning 133–328 is the ATP-grasp 1 domain; that stretch reads EHSMKKLNLE…IAKIAAKLAI (196 aa). Q285, E299, and N301 together coordinate Mg(2+). Mn(2+)-binding residues include Q285, E299, and N301. The interval 404–553 is oligomerization domain; the sequence is VGASGFDSKI…YSTWEDECES (150 aa). The tract at residues 554-936 is carbamoyl phosphate synthetic domain; the sequence is HPSKNNKKII…AFSKSMLGAH (383 aa). The region spanning 679-870 is the ATP-grasp 2 domain; the sequence is QKTVNKLRLQ…LAKISVRVMC (192 aa). ATP is bound by residues R715, Q754, L756, E761, G786, V787, H788, S789, Q829, and E841. Positions 829, 841, and 843 each coordinate Mg(2+). Mn(2+) contacts are provided by Q829, E841, and N843. Residues 937–1079 form the MGS-like domain; it reads TNMKKSGRVL…KKIQLFYTKK (143 aa). The segment at 937 to 1079 is allosteric domain; sequence TNMKKSGRVL…KKIQLFYTKK (143 aa).

It belongs to the CarB family. Composed of two chains; the small (or glutamine) chain promotes the hydrolysis of glutamine to ammonia, which is used by the large (or ammonia) chain to synthesize carbamoyl phosphate. Tetramer of heterodimers (alpha,beta)4. The cofactor is Mg(2+). Requires Mn(2+) as cofactor.

It carries out the reaction hydrogencarbonate + L-glutamine + 2 ATP + H2O = carbamoyl phosphate + L-glutamate + 2 ADP + phosphate + 2 H(+). It catalyses the reaction hydrogencarbonate + NH4(+) + 2 ATP = carbamoyl phosphate + 2 ADP + phosphate + 2 H(+). Its pathway is amino-acid biosynthesis; L-arginine biosynthesis; carbamoyl phosphate from bicarbonate: step 1/1. The protein operates within pyrimidine metabolism; UMP biosynthesis via de novo pathway; (S)-dihydroorotate from bicarbonate: step 1/3. Its function is as follows. Large subunit of the glutamine-dependent carbamoyl phosphate synthetase (CPSase). CPSase catalyzes the formation of carbamoyl phosphate from the ammonia moiety of glutamine, carbonate, and phosphate donated by ATP, constituting the first step of 2 biosynthetic pathways, one leading to arginine and/or urea and the other to pyrimidine nucleotides. The large subunit (synthetase) binds the substrates ammonia (free or transferred from glutamine from the small subunit), hydrogencarbonate and ATP and carries out an ATP-coupled ligase reaction, activating hydrogencarbonate by forming carboxy phosphate which reacts with ammonia to form carbamoyl phosphate. This Buchnera aphidicola subsp. Acyrthosiphon pisum (strain APS) (Acyrthosiphon pisum symbiotic bacterium) protein is Carbamoyl phosphate synthase large chain.